Consider the following 191-residue polypeptide: Holliday junction branch migration complex subunit RuvA (191 aa).

Residues 1-64 (MIGSITGNVE…DNITQLYGFL (64 aa)) form a domain I region. The domain II stretch occupies residues 65-142 (NRQEQDYFKM…KMPIEETFSI (78 aa)). The flexible linker stretch occupies residues 143–146 (IEND). The domain III stretch occupies residues 146–191 (DDSLAALISLGYEKLKAFNVIQEIKSKTPDASTQEVIRKALQKLSQ).

This sequence belongs to the RuvA family. As to quaternary structure, homotetramer. Forms an RuvA(8)-RuvB(12)-Holliday junction (HJ) complex. HJ DNA is sandwiched between 2 RuvA tetramers; dsDNA enters through RuvA and exits via RuvB. An RuvB hexamer assembles on each DNA strand where it exits the tetramer. Each RuvB hexamer is contacted by two RuvA subunits (via domain III) on 2 adjacent RuvB subunits; this complex drives branch migration. In the full resolvosome a probable DNA-RuvA(4)-RuvB(12)-RuvC(2) complex forms which resolves the HJ.

The protein localises to the cytoplasm. Its function is as follows. The RuvA-RuvB-RuvC complex processes Holliday junction (HJ) DNA during genetic recombination and DNA repair, while the RuvA-RuvB complex plays an important role in the rescue of blocked DNA replication forks via replication fork reversal (RFR). RuvA specifically binds to HJ cruciform DNA, conferring on it an open structure. The RuvB hexamer acts as an ATP-dependent pump, pulling dsDNA into and through the RuvAB complex. HJ branch migration allows RuvC to scan DNA until it finds its consensus sequence, where it cleaves and resolves the cruciform DNA. This is Holliday junction branch migration complex subunit RuvA from Ehrlichia ruminantium (strain Gardel).